Here is a 419-residue protein sequence, read N- to C-terminus: Large ribosomal subunit protein uL4 (419 aa).

Alanine 2 is modified (N-acetylalanine). Lysine 14 bears the N6-acetyllysine mark. Arginine 97 is modified (omega-N-methylarginine). Lysine 106 carries the post-translational modification N6-acetyllysine. A Glycyl lysine isopeptide (Lys-Gly) (interchain with G-Cter in SUMO2) cross-link involves residue lysine 239. Residue lysine 259 is modified to N6-acetyllysine. Threonine 266 bears the Phosphothreonine mark. Serine 290 and serine 295 each carry phosphoserine. Arginine 300 is subject to Citrulline. Lysine 327 participates in a covalent cross-link: Glycyl lysine isopeptide (Lys-Gly) (interchain with G-Cter in SUMO2). An N6-acetyllysine mark is found at lysine 333 and lysine 353. Lysine 364 is subject to N6-acetyllysine; alternate. A Glycyl lysine isopeptide (Lys-Gly) (interchain with G-Cter in SUMO1); alternate cross-link involves residue lysine 364. Residues 364-379 (KSEKVVPEKGTADKKP) show a composition bias toward basic and acidic residues. The disordered stretch occupies residues 364–419 (KSEKVVPEKGTADKKPAVGKKGKKVDAKKQKPAGKKVVAKKPAEKKPTTEEKKPAA). The residue at position 365 (serine 365) is a Phosphoserine. A compositionally biased stretch (basic residues) spans 393–402 (QKPAGKKVVA). A compositionally biased stretch (basic and acidic residues) spans 404 to 419 (KPAEKKPTTEEKKPAA).

This sequence belongs to the universal ribosomal protein uL4 family. Component of the large ribosomal subunit. May bind IPO9 with low affinity. Interacts with RBM3. In terms of processing, citrullinated by PADI4.

It localises to the cytoplasm. In terms of biological role, component of the large ribosomal subunit. The ribosome is a large ribonucleoprotein complex responsible for the synthesis of proteins in the cell. This is Large ribosomal subunit protein uL4 (Rpl4) from Mus musculus (Mouse).